Reading from the N-terminus, the 853-residue chain is Trimethylguanosine synthase (853 aa).

The disordered stretch occupies residues 54-84 (NNAGDQGTEEEEDGHSNGTAESHSPNESDLD). A Phosphothreonine modification is found at T61. The span at 69–80 (SNGTAESHSPNE) shows a compositional bias: polar residues. 4 positions are modified to phosphoserine: S81, S85, S92, and S139. A Phosphotyrosine modification is found at Y144. A Phosphoserine modification is found at S152. Disordered stretches follow at residues 328–437 (VEQS…DDNG) and 523–549 (ETSQDSLSQNKMQDTCTSSDSEEQDMS). The span at 365–383 (KENDISENRSSDQPAKELQ) shows a compositional bias: basic and acidic residues. S405 and S431 each carry phosphoserine. The segment covering 424 to 435 (DVDENPDSEVDD) has biased composition (acidic residues). A compositionally biased stretch (polar residues) spans 526 to 541 (QDSLSQNKMQDTCTSS). Phosphoserine is present on S572. The segment at 594 to 623 (CSTEEIPNSPHAETEVEIKKKKKKNKNKKI) is disordered. The segment covering 612-621 (KKKKKKNKNK) has biased composition (basic residues). D711 is a binding site for S-adenosyl-L-methionine.

The protein belongs to the methyltransferase superfamily. Trimethylguanosine synthase family. May form homooligomers. Interacts with CREBBP/CBP, EED/WAIT1, EP300/P300, NCOA6/PRIP, PPARBP/PBP and SMN. Ubiquitously expressed.

The protein localises to the cytoplasm. The protein resides in the nucleus. Its subcellular location is the cajal body. It localises to the nucleolus. It catalyses the reaction a 5'-end (N(7)-methyl 5'-triphosphoguanosine)-ribonucleoside in snRNA + S-adenosyl-L-methionine = a 5'-end (N(2),N(7)-dimethyl 5'-triphosphoguanosine)-ribonucleoside in snRNA + S-adenosyl-L-homocysteine + H(+). The enzyme catalyses a 5'-end (N(7)-methyl 5'-triphosphoguanosine)-ribonucleoside in snoRNA + S-adenosyl-L-methionine = a 5'-end (N(2),N(7)-dimethyl 5'-triphosphoguanosine)-ribonucleoside in snoRNA + S-adenosyl-L-homocysteine + H(+). It carries out the reaction a 5'-end (N(2),N(7)-dimethyl 5'-triphosphoguanosine)-ribonucleoside in snRNA + S-adenosyl-L-methionine = a 5'-end (N(2),N(2),N(7)-trimethyl 5'-triphosphoguanosine)-ribonucleoside in snRNA + S-adenosyl-L-homocysteine + H(+). The catalysed reaction is a 5'-end (N(2),N(7)-dimethyl 5'-triphosphoguanosine)-ribonucleoside in snoRNA + S-adenosyl-L-methionine = a 5'-end (N(2),N(2),N(7)-trimethyl 5'-triphosphoguanosine)-ribonucleoside in snoRNA + S-adenosyl-L-homocysteine + H(+). In terms of biological role, catalyzes the 2 serial methylation steps for the conversion of the 7-monomethylguanosine (m(7)G) caps of snRNAs and snoRNAs to a 2,2,7-trimethylguanosine (m(2,2,7)G) cap structure. The enzyme is specific for guanine, and N7 methylation must precede N2 methylation. Hypermethylation of the m7G cap of U snRNAs leads to their concentration in nuclear foci, their colocalization with coilin and the formation of canonical Cajal bodies (CBs). Plays a role in transcriptional regulation. The protein is Trimethylguanosine synthase (Tgs1) of Mus musculus (Mouse).